Reading from the N-terminus, the 336-residue chain is Holliday junction branch migration complex subunit RuvB (336 aa).

A large ATPase domain (RuvB-L) region spans residues 4 to 184; that stretch reads ADRLVAPGSI…FGIVQRLEFY (181 aa). ATP is bound by residues Ile-23, Arg-24, Gly-65, Lys-68, Thr-69, Thr-70, 131-133, Arg-174, Tyr-184, and Arg-221; that span reads EDY. Position 69 (Thr-69) interacts with Mg(2+). Residues 185–255 are small ATPAse domain (RuvB-S); that stretch reads QVADLQHIVS…VASQALDMLN (71 aa). The tract at residues 258 to 336 is head domain (RuvB-H); the sequence is AEGFDYMDRK…HFGITPPQMP (79 aa). DNA is bound by residues Arg-294, Arg-313, and Arg-318.

Belongs to the RuvB family. In terms of assembly, homohexamer. Forms an RuvA(8)-RuvB(12)-Holliday junction (HJ) complex. HJ DNA is sandwiched between 2 RuvA tetramers; dsDNA enters through RuvA and exits via RuvB. An RuvB hexamer assembles on each DNA strand where it exits the tetramer. Each RuvB hexamer is contacted by two RuvA subunits (via domain III) on 2 adjacent RuvB subunits; this complex drives branch migration. In the full resolvosome a probable DNA-RuvA(4)-RuvB(12)-RuvC(2) complex forms which resolves the HJ.

The protein localises to the cytoplasm. The catalysed reaction is ATP + H2O = ADP + phosphate + H(+). The RuvA-RuvB-RuvC complex processes Holliday junction (HJ) DNA during genetic recombination and DNA repair, while the RuvA-RuvB complex plays an important role in the rescue of blocked DNA replication forks via replication fork reversal (RFR). RuvA specifically binds to HJ cruciform DNA, conferring on it an open structure. The RuvB hexamer acts as an ATP-dependent pump, pulling dsDNA into and through the RuvAB complex. RuvB forms 2 homohexamers on either side of HJ DNA bound by 1 or 2 RuvA tetramers; 4 subunits per hexamer contact DNA at a time. Coordinated motions by a converter formed by DNA-disengaged RuvB subunits stimulates ATP hydrolysis and nucleotide exchange. Immobilization of the converter enables RuvB to convert the ATP-contained energy into a lever motion, pulling 2 nucleotides of DNA out of the RuvA tetramer per ATP hydrolyzed, thus driving DNA branch migration. The RuvB motors rotate together with the DNA substrate, which together with the progressing nucleotide cycle form the mechanistic basis for DNA recombination by continuous HJ branch migration. Branch migration allows RuvC to scan DNA until it finds its consensus sequence, where it cleaves and resolves cruciform DNA. This is Holliday junction branch migration complex subunit RuvB from Cronobacter sakazakii (strain ATCC BAA-894) (Enterobacter sakazakii).